The following is a 955-amino-acid chain: Glycine dehydrogenase (decarboxylating) (955 aa).

An N6-(pyridoxal phosphate)lysine modification is found at lysine 702.

The protein belongs to the GcvP family. The glycine cleavage system is composed of four proteins: P, T, L and H. It depends on pyridoxal 5'-phosphate as a cofactor.

The enzyme catalyses N(6)-[(R)-lipoyl]-L-lysyl-[glycine-cleavage complex H protein] + glycine + H(+) = N(6)-[(R)-S(8)-aminomethyldihydrolipoyl]-L-lysyl-[glycine-cleavage complex H protein] + CO2. In terms of biological role, the glycine cleavage system catalyzes the degradation of glycine. The P protein binds the alpha-amino group of glycine through its pyridoxal phosphate cofactor; CO(2) is released and the remaining methylamine moiety is then transferred to the lipoamide cofactor of the H protein. The polypeptide is Glycine dehydrogenase (decarboxylating) (Bordetella avium (strain 197N)).